A 187-amino-acid chain; its full sequence is MSGGVKLIAGLGNPGDQYARTRHNVGAWFLETLAQQRNQSLAKENKFHGFVAKCNDYWLLKPTTFMNESGQAVAALAHFYKIKPSEILIAHDELDFPAGDIRLKEGGGHGGHNGLRNIIQHLGSSDFYRLRIGINHPGHKDRVTPYVLSPPSENDRIAILAAIEKGLRLIPELVQGDFQKVMRELHS.

Tyr18 contacts tRNA. The active-site Proton acceptor is the His23. Positions 65, 67, and 113 each coordinate tRNA.

This sequence belongs to the PTH family. As to quaternary structure, monomer.

The protein resides in the cytoplasm. The enzyme catalyses an N-acyl-L-alpha-aminoacyl-tRNA + H2O = an N-acyl-L-amino acid + a tRNA + H(+). Functionally, hydrolyzes ribosome-free peptidyl-tRNAs (with 1 or more amino acids incorporated), which drop off the ribosome during protein synthesis, or as a result of ribosome stalling. Its function is as follows. Catalyzes the release of premature peptidyl moieties from peptidyl-tRNA molecules trapped in stalled 50S ribosomal subunits, and thus maintains levels of free tRNAs and 50S ribosomes. This is Peptidyl-tRNA hydrolase from Coxiella burnetii (strain RSA 331 / Henzerling II).